A 44-amino-acid chain; its full sequence is Thymosin beta-12 (44 aa).

2 stretches are compositionally biased toward basic and acidic residues: residues 1–25 and 33–44; these read MSDK…ETQE and ETIEQEKAAATS. The tract at residues 1-44 is disordered; it reads MSDKPDISEVTSFDKTKLKKTETQEKNPLPSKETIEQEKAAATS. Residue Ser-2 is modified to N-acetylserine.

It belongs to the thymosin beta family.

Its subcellular location is the cytoplasm. It localises to the cytoskeleton. Its function is as follows. Plays an important role in the organization of the cytoskeleton. Binds to and sequesters actin monomers (G actin) and therefore inhibits actin polymerization. The sequence is that of Thymosin beta-12 from Lateolabrax japonicus (Japanese sea perch).